Consider the following 131-residue polypeptide: MLCPVLLCATLLLLTPFEVTEARALHPSADAVQFVEQFLDRYNDLLTLDDLENLLNTQPEEQSTLSSGVKTAEYPKWADLQTQPETPWFRLLKGALTNQKRAEPDRSRRGWNRGCFGLKLDRIGSMSGLGC.

The N-terminal stretch at 1 to 22 is a signal peptide; the sequence is MLCPVLLCATLLLLTPFEVTEA. A propeptide spanning residues 23 to 109 is cleaved from the precursor; the sequence is RALHPSADAV…KRAEPDRSRR (87 aa). Cysteines 115 and 131 form a disulfide.

Belongs to the natriuretic peptide family. In terms of tissue distribution, brain and spinal cord.

The protein localises to the secreted. Exhibits natriuretic and vasodepressant activity. Has cGMP-stimulating activity. May help to regulate body fluid homeostasis in a variety of aquatic environments. The polypeptide is C-type natriuretic peptide 1 (Oryzias latipes (Japanese rice fish)).